Consider the following 128-residue polypeptide: MPVGEGSHHNKILGVRGEDLAAAYLERLRYRIIDRNFRCRGGEVDIVARDGKTLVFVEVKTRRTAGYGVPQLAVTPFKQRQISKAALAWLTRKGMLDVNARFDVIAITILSPDAPRIEHITNAFELAY.

It belongs to the UPF0102 family.

The chain is UPF0102 protein GSU0650 from Geobacter sulfurreducens (strain ATCC 51573 / DSM 12127 / PCA).